Reading from the N-terminus, the 489-residue chain is Putative L,D-transpeptidase HI_1667 (489 aa).

The chain crosses the membrane as a helical span at residues 10–29 (LSLFALSLSMMMSGCVLVGL). Residues 254-433 (NGIFVNIPSY…ETRKNTVLAS (180 aa)) form the L,D-TPase catalytic domain. H384 functions as the Proton donor/acceptor in the catalytic mechanism. C403 (nucleophile) is an active-site residue.

It belongs to the YkuD family.

It localises to the membrane. It participates in cell wall biogenesis; peptidoglycan biosynthesis. This Haemophilus influenzae (strain ATCC 51907 / DSM 11121 / KW20 / Rd) protein is Putative L,D-transpeptidase HI_1667.